We begin with the raw amino-acid sequence, 430 residues long: Adenylosuccinate synthetase (430 aa).

GTP-binding positions include 12 to 18 (GDEGKGK) and 40 to 42 (GHT). The Proton acceptor role is filled by aspartate 13. Mg(2+) contacts are provided by aspartate 13 and glycine 40. Residues 13–16 (DEGK), 38–41 (NAGH), threonine 130, arginine 144, glutamine 224, threonine 239, and arginine 303 each bind IMP. The Proton donor role is filled by histidine 41. 299 to 305 (TVTGRKR) contacts substrate. GTP-binding positions include arginine 305, 331 to 333 (KLD), and 413 to 415 (STS).

This sequence belongs to the adenylosuccinate synthetase family. Homodimer. It depends on Mg(2+) as a cofactor.

The protein resides in the cytoplasm. The enzyme catalyses IMP + L-aspartate + GTP = N(6)-(1,2-dicarboxyethyl)-AMP + GDP + phosphate + 2 H(+). The protein operates within purine metabolism; AMP biosynthesis via de novo pathway; AMP from IMP: step 1/2. Functionally, plays an important role in the de novo pathway of purine nucleotide biosynthesis. Catalyzes the first committed step in the biosynthesis of AMP from IMP. In Parvibaculum lavamentivorans (strain DS-1 / DSM 13023 / NCIMB 13966), this protein is Adenylosuccinate synthetase.